The sequence spans 466 residues: Phosphomethylpyrimidine synthase (466 aa).

Substrate contacts are provided by residues asparagine 80, methionine 109, tyrosine 139, histidine 175, 195 to 197 (SRG), 236 to 239 (DSLR), and glutamate 275. Histidine 279 contacts Zn(2+). Tyrosine 302 contributes to the substrate binding site. A Zn(2+)-binding site is contributed by histidine 343. [4Fe-4S] cluster is bound by residues cysteine 423, cysteine 426, and cysteine 431.

Belongs to the ThiC family. The cofactor is [4Fe-4S] cluster.

The catalysed reaction is 5-amino-1-(5-phospho-beta-D-ribosyl)imidazole + S-adenosyl-L-methionine = 4-amino-2-methyl-5-(phosphooxymethyl)pyrimidine + CO + 5'-deoxyadenosine + formate + L-methionine + 3 H(+). The protein operates within cofactor biosynthesis; thiamine diphosphate biosynthesis. Its function is as follows. Catalyzes the synthesis of the hydroxymethylpyrimidine phosphate (HMP-P) moiety of thiamine from aminoimidazole ribotide (AIR) in a radical S-adenosyl-L-methionine (SAM)-dependent reaction. The polypeptide is Phosphomethylpyrimidine synthase (Prochlorococcus marinus (strain NATL2A)).